The chain runs to 97 residues: Large ribosomal subunit protein bL27 (97 aa).

A propeptide spanning residues 1-12 is cleaved from the precursor; it reads MLKMNLANLQLF. The interval 14–37 is disordered; that stretch reads HKKGGGSTSNGRDSQAKRLGAKAA.

This sequence belongs to the bacterial ribosomal protein bL27 family. In terms of processing, the N-terminus is cleaved by ribosomal processing cysteine protease Prp.

This Streptococcus uberis (strain ATCC BAA-854 / 0140J) protein is Large ribosomal subunit protein bL27.